The primary structure comprises 101 residues: Small ribosomal subunit protein uS14 (101 aa).

The protein belongs to the universal ribosomal protein uS14 family. As to quaternary structure, part of the 30S ribosomal subunit. Contacts proteins S3 and S10.

Functionally, binds 16S rRNA, required for the assembly of 30S particles and may also be responsible for determining the conformation of the 16S rRNA at the A site. The protein is Small ribosomal subunit protein uS14 of Vesicomyosocius okutanii subsp. Calyptogena okutanii (strain HA).